The following is an 807-amino-acid chain: Sucrose synthase 2 (807 aa).

Residues 274-752 (MVFNVVILSP…GLKRIYERYT (479 aa)) are GT-B glycosyltransferase.

This sequence belongs to the glycosyltransferase 1 family. Plant sucrose synthase subfamily. As to expression, detected in the whole plant but at lower levels. Predominantly expressed in developing siliques. Also detected in the root tip. Detected in the embryo, endosperm and seed coat (at the protein level).

Its subcellular location is the cytoplasm. The protein resides in the plastid membrane. It carries out the reaction an NDP-alpha-D-glucose + D-fructose = a ribonucleoside 5'-diphosphate + sucrose + H(+). In terms of biological role, sucrose-cleaving enzyme that provides UDP-glucose and fructose for various metabolic pathways. Modulates metabolic homeostasis and directs carbon towards starch synthesis in developing seeds. In Arabidopsis thaliana (Mouse-ear cress), this protein is Sucrose synthase 2 (SUS2).